Consider the following 442-residue polypeptide: ATP-dependent protease ATPase subunit HslU (442 aa).

ATP contacts are provided by residues isoleucine 18 and 60–65; that span reads GVGKTE. The interval 133–156 is disordered; it reads DALLPKPKNDWDNTDSDTSSNTRQ. ATP contacts are provided by aspartate 255, glutamate 320, and arginine 392.

It belongs to the ClpX chaperone family. HslU subfamily. As to quaternary structure, a double ring-shaped homohexamer of HslV is capped on each side by a ring-shaped HslU homohexamer. The assembly of the HslU/HslV complex is dependent on binding of ATP.

The protein localises to the cytoplasm. Its function is as follows. ATPase subunit of a proteasome-like degradation complex; this subunit has chaperone activity. The binding of ATP and its subsequent hydrolysis by HslU are essential for unfolding of protein substrates subsequently hydrolyzed by HslV. HslU recognizes the N-terminal part of its protein substrates and unfolds these before they are guided to HslV for hydrolysis. The polypeptide is ATP-dependent protease ATPase subunit HslU (Shewanella sp. (strain ANA-3)).